The primary structure comprises 649 residues: Transcription factor E2-alpha (649 aa).

Disordered stretches follow at residues 37 to 107 (RPAS…SERN), 132 to 207 (GLSS…AKTP), 296 to 325 (TYSGTSGHTPPVSGADSLLGTRGTTASSSG), and 339 to 376 (DHSSNNFSPSPSTPVGSPQGLPGTSQWPRAGAPSALSP). The segment covering 57–71 (SESWGNSEQNSSSFD) has biased composition (polar residues). Positions 132-148 (GLSSPGPLSPSGVKSSS) are enriched in low complexity. Residues S135 and S140 each carry the phosphoserine modification. The Nuclear localization signal signature appears at 171–177 (PKKVRKV). Over residues 339-352 (DHSSNNFSPSPSTP) the composition is skewed to low complexity. Residue T351 is modified to Phosphothreonine. S355 carries the post-translational modification Phosphoserine. R367 is modified (omega-N-methylarginine). Position 375 is a phosphoserine (S375). Residues 385–420 (LSKMEDRLDEAIHVLRSHAVGTASELHGLLPGHSTL) are leucine-zipper. A disordered region spans residues 435–547 (AGLVSGSHPE…KAEREKERRV (113 aa)). The segment covering 459-477 (SLPSQPSSLPDLSQRPPDS) has biased composition (low complexity). Residue K494 forms a Glycyl lysine isopeptide (Lys-Gly) (interchain with G-Cter in SUMO2) linkage. The residue at position 524 (S524) is a Phosphoserine. The residue at position 526 (D526) is a Phosphothreonine. Over residues 537–547 (QKAEREKERRV) the composition is skewed to basic and acidic residues. Residues 544–597 (ERRVANNARERLRVRDINEAFKELGRMCQLHLSTEKPQTKLLILHQAVAVILSL) form the bHLH domain. Residue K620 forms a Glycyl lysine isopeptide (Lys-Gly) (interchain with G-Cter in SUMO2) linkage.

As to quaternary structure, homodimer. Heterodimer; efficient DNA binding requires dimerization with another bHLH protein. Forms a heterodimer with TWIST1 and TWIST2. Forms a heterodimer with NEUROD1; the heterodimer is inhibited in presence of ID2, but not NR0B2, to E-box element. Forms a heterodimer with TCF15; the heterodimer binds E-box element. Forms a heterodimer with MYOG; heterodimerization enhances MYOG DNA-binding and transcriptional activities. Forms a heterodimer with ATOH8; repress transcription of TCF3 and TCF3-NEUROG3 dimer-induced transactivation of E box-dependent promoters. Component of a nuclear TAL-1 complex composed at least of CBFA2T3, LDB1, TAL1 and TCF3. Interacts with NEUROD2. Interacts with EP300. Interacts with PTF1A, TGFB1I1. Interacts with UBE2I. Interacts with BHLHA9. Interacts with ASB2; the interaction is mediated by SKP2 and targets TCF3 for Notch-induced proteasomal degradation. Interacts with transcription factor ASCL5/AmeloD. In terms of assembly, interacts with RALGAPA1. Interacts with FIGLA. Forms a heterodimer with ATOH7; required for ATOH7 DNA-binding. In terms of processing, phosphorylated following NGF stimulation. Post-translationally, undergoes Notch-induced ubiquitination and subsequent proteasomal degradation which is mediated by ASB1 or ASB2, the substrate-recognition components of probable ECS E3 ubiquitin-protein ligase complexes.

It is found in the nucleus. Its function is as follows. Transcriptional regulator involved in the initiation of neuronal differentiation and mesenchymal to epithelial transition. Heterodimers between TCF3 and tissue-specific basic helix-loop-helix (bHLH) proteins play major roles in determining tissue-specific cell fate during embryogenesis, like muscle or early B-cell differentiation. Together with TCF15, required for the mesenchymal to epithelial transition. Dimers bind DNA on E-box motifs: 5'-CANNTG-3'. Binds to the kappa-E2 site in the kappa immunoglobulin gene enhancer. Binds to the consensus sequence CAC/GCTGT/C present, in the chymotrypsin, insulin, AP-4, and several other gene enhancer motifs. In terms of biological role, facilitates ATOH7 binding to DNA at the consensus sequence 5'-CAGGTG-3', and positively regulates transcriptional activity. The polypeptide is Transcription factor E2-alpha (Tcf3) (Rattus norvegicus (Rat)).